The primary structure comprises 368 residues: Isopentenyl-diphosphate delta-isomerase (368 aa).

7-8 is a substrate binding site; that stretch reads RK. Residues threonine 65, 66–68, serine 96, and asparagine 125 each bind FMN; that span reads GMT. 96 to 98 contributes to the substrate binding site; that stretch reads SQR. Position 160 (glutamine 160) interacts with substrate. Glutamate 161 provides a ligand contact to Mg(2+). Residues lysine 193, serine 218, threonine 223, 275 to 277, and 296 to 297 each bind FMN; these read GIR and AL.

The protein belongs to the IPP isomerase type 2 family. As to quaternary structure, homooctamer. Dimer of tetramers. Requires FMN as cofactor. NADPH is required as a cofactor. Mg(2+) serves as cofactor.

It localises to the cytoplasm. It carries out the reaction isopentenyl diphosphate = dimethylallyl diphosphate. In terms of biological role, involved in the biosynthesis of isoprenoids. Catalyzes the 1,3-allylic rearrangement of the homoallylic substrate isopentenyl (IPP) to its allylic isomer, dimethylallyl diphosphate (DMAPP). The polypeptide is Isopentenyl-diphosphate delta-isomerase (Saccharolobus islandicus (strain M.16.27) (Sulfolobus islandicus)).